The primary structure comprises 230 residues: Large ribosomal subunit protein uL1 (230 aa).

Belongs to the universal ribosomal protein uL1 family. Part of the 50S ribosomal subunit.

Binds directly to 23S rRNA. The L1 stalk is quite mobile in the ribosome, and is involved in E site tRNA release. Functionally, protein L1 is also a translational repressor protein, it controls the translation of the L11 operon by binding to its mRNA. This is Large ribosomal subunit protein uL1 from Oenococcus oeni (strain ATCC BAA-331 / PSU-1).